Here is a 243-residue protein sequence, read N- to C-terminus: MEQGSGRLEDFPVNVFSVTPYTPSTADIQVSDDDKAGATLLFSGIFLGLVGITFTVMGWIKYQGVSHFEWTQLLGPVLLSVGVTFILIAVCKFKMLSCQLCKESEERVPDSEQTPGGPSFVFTGINQPITFHGATVVQYIPPPYGSPEPMGINTSYLQSVVSPCGLITSGGAAAAMSSPPQYYTIYPQDNSAFVVDEGCLSFTDGGNHRPNPDVDQLEETQLEEEACACFSPPPYEEIYSLPR.

The next 2 membrane-spanning stretches (helical) occupy residues 40-60 and 73-93; these read LLFS…MGWI and LLGP…VCKF.

Interacts with SLC34A1; regulates SLC34A1 internalization by PTH and FGF23. As to expression, predominantly expressed in kidney. Selectively localized in the apical membrane of renal proximal tubule epithelial cells.

The protein localises to the endoplasmic reticulum membrane. It is found in the apical cell membrane. Its function is as follows. Regulator of plasma phosphate homeostasis. Decreases serum inorganic phosphate (Pi) uptake by regulating the sodium-phosphate cotransporter SLC34A1 trafficking by PTH and FGF23 in the kidney. This Homo sapiens (Human) protein is Transmembrane protein 174 (TMEM174).